Reading from the N-terminus, the 445-residue chain is Reticulon-4 receptor-like 1 (445 aa).

Residues 1–24 (MLRKGCCVELLLLLLAGELPLSGG) form the signal peptide. In terms of domain architecture, LRRNT spans 25-54 (CPRDCVCYPSPMTVSCQAHNFAAIPEGIPE). 8 LRR repeats span residues 55–76 (DSERIFLQNNHITFLQQGHFSP), 77–98 (AMVTLWIYSNNITFIAPNTFEG), 101–123 (HLEELDLGDNRQLRTLAPETFQG), 126–147 (KLHALYLYKCGLSSLPAGIFGG), 150–171 (SLQYLYLQDNHIEYLQDDIFVD), 174–195 (NLSHLFLHGNKLWSLGQGIFRG), 198–219 (NLDRLLLHENQLQWVHHKAFHD), and 222–243 (RLTTLFLFNNSLTELQGDCLAP). In terms of domain architecture, LRRCT spans 255 to 306 (NAWDCGCRARSLWEWLRRFRGSSSVVPCATPELRQGQDLKSLRVEDFRNCTG). Disordered regions lie at residues 304–380 (CTGP…ELPE) and 401–421 (RPKRKGKCARRTPIRAPSGVQ). 2 stretches are compositionally biased toward basic residues: residues 352 to 366 (GSKKPGKNCTSHRNR) and 401 to 413 (RPKRKGKCARRTP). Residue Ser424 is the site of GPI-anchor amidated serine attachment. The helical transmembrane segment at 424–444 (SSGTALGVSLLAWILGLVVSL) threads the bilayer. Residues 425 to 445 (SGTALGVSLLAWILGLVVSLR) constitute a propeptide, removed in mature form.

The protein belongs to the Nogo receptor family. As to quaternary structure, identified in a complex that contains RTN4R, RTN4RL1 and NGFR; the interaction depends on the presence of chondroitin sulfate proteoglycans. Does not interact with MAG, OMG and RTN4. As to expression, detected in brain (at protein level). Expressed in various regions of the brain, including the cerebral cortex, hippocampus, striatum, thalamus and cerebellum.

Its subcellular location is the cell membrane. The protein resides in the membrane raft. It is found in the perikaryon. The protein localises to the cell projection. Cell surface receptor. Plays a functionally redundant role in postnatal brain development and in regulating axon regeneration in the adult central nervous system. Contributes to normal axon migration across the brain midline and normal formation of the corpus callosum. Protects motoneurons against apoptosis; protection against apoptosis is probably mediated by MAG. Plays a role in inhibiting neurite outgrowth and axon regeneration via its binding to neuronal chondroitin sulfate proteoglycans. Binds heparin. Like other family members, plays a role in restricting the number dendritic spines and the number of synapses that are formed during brain development. Signaling mediates activation of Rho and downstream reorganization of the actin cytoskeleton. This Rattus norvegicus (Rat) protein is Reticulon-4 receptor-like 1.